Reading from the N-terminus, the 382-residue chain is Homoserine O-succinyltransferase (382 aa).

The AB hydrolase-1 domain occupies 51-359; it reads NAILVCHALS…EATQGHDAFL (309 aa). The Nucleophile role is filled by serine 157. Substrate is bound at residue arginine 227. Residues aspartate 322 and histidine 355 contribute to the active site. Aspartate 356 is a substrate binding site.

This sequence belongs to the AB hydrolase superfamily. MetX family. In terms of assembly, homodimer.

It localises to the cytoplasm. It carries out the reaction L-homoserine + succinyl-CoA = O-succinyl-L-homoserine + CoA. It functions in the pathway amino-acid biosynthesis; L-methionine biosynthesis via de novo pathway; O-succinyl-L-homoserine from L-homoserine: step 1/1. Transfers a succinyl group from succinyl-CoA to L-homoserine, forming succinyl-L-homoserine. In Halorhodospira halophila (strain DSM 244 / SL1) (Ectothiorhodospira halophila (strain DSM 244 / SL1)), this protein is Homoserine O-succinyltransferase.